An 81-amino-acid polypeptide reads, in one-letter code: ATP synthase subunit c (81 aa).

Helical transmembrane passes span 4-24 (MIAQ…AIGA) and 57-77 (VGLV…FVFA).

This sequence belongs to the ATPase C chain family. As to quaternary structure, F-type ATPases have 2 components, F(1) - the catalytic core - and F(0) - the membrane proton channel. F(1) has five subunits: alpha(3), beta(3), gamma(1), delta(1), epsilon(1). F(0) has three main subunits: a(1), b(2) and c(10-14). The alpha and beta chains form an alternating ring which encloses part of the gamma chain. F(1) is attached to F(0) by a central stalk formed by the gamma and epsilon chains, while a peripheral stalk is formed by the delta and b chains.

It is found in the cell membrane. Its function is as follows. F(1)F(0) ATP synthase produces ATP from ADP in the presence of a proton or sodium gradient. F-type ATPases consist of two structural domains, F(1) containing the extramembraneous catalytic core and F(0) containing the membrane proton channel, linked together by a central stalk and a peripheral stalk. During catalysis, ATP synthesis in the catalytic domain of F(1) is coupled via a rotary mechanism of the central stalk subunits to proton translocation. Functionally, key component of the F(0) channel; it plays a direct role in translocation across the membrane. A homomeric c-ring of between 10-14 subunits forms the central stalk rotor element with the F(1) delta and epsilon subunits. This is ATP synthase subunit c from Mycobacterium leprae (strain TN).